The following is a 275-amino-acid chain: Thioredoxin-like 1-1, chloroplastic (275 aa).

The N-terminal 72 residues, 1–72 (MTEVISKTSL…GDSQDESFRR (72 aa)), are a transit peptide targeting the chloroplast. The region spanning 73–206 (SSAITAQTTL…FRDALAKHGP (134 aa)) is the Thioredoxin domain. Catalysis depends on nucleophile residues cysteine 129 and cysteine 132. Cysteine 129 and cysteine 132 form a disulfide bridge. The interval 238–275 (KPVPVEKEAATPDSNPSLPVPLPSMSSNDEKTLVSAGR) is disordered. Residues 249–264 (PDSNPSLPVPLPSMSS) are compositionally biased toward low complexity.

Belongs to the thioredoxin family.

The protein resides in the plastid. It localises to the chloroplast. Thiol-disulfide oxidoreductase that may participate in various redox reactions. Possesses insulin disulfide bonds reducing activity. The chain is Thioredoxin-like 1-1, chloroplastic from Arabidopsis thaliana (Mouse-ear cress).